The sequence spans 275 residues: 3-methyl-2-oxobutanoate hydroxymethyltransferase (275 aa).

Mg(2+) is bound by residues Asp-44 and Asp-83. Residues 44 to 45 (DS), Asp-83, and Lys-113 each bind 3-methyl-2-oxobutanoate. Glu-115 contributes to the Mg(2+) binding site. Glu-182 acts as the Proton acceptor in catalysis.

The protein belongs to the PanB family. Homodecamer; pentamer of dimers. It depends on Mg(2+) as a cofactor.

It is found in the cytoplasm. It catalyses the reaction 3-methyl-2-oxobutanoate + (6R)-5,10-methylene-5,6,7,8-tetrahydrofolate + H2O = 2-dehydropantoate + (6S)-5,6,7,8-tetrahydrofolate. The protein operates within cofactor biosynthesis; (R)-pantothenate biosynthesis; (R)-pantoate from 3-methyl-2-oxobutanoate: step 1/2. Its function is as follows. Catalyzes the reversible reaction in which hydroxymethyl group from 5,10-methylenetetrahydrofolate is transferred onto alpha-ketoisovalerate to form ketopantoate. This is 3-methyl-2-oxobutanoate hydroxymethyltransferase from Clostridium botulinum (strain Kyoto / Type A2).